We begin with the raw amino-acid sequence, 427 residues long: Trigger factor (427 aa).

The PPIase FKBP-type domain maps to 163–248 (GDTVVIDFVG…VNEVKAKELP (86 aa)).

The protein belongs to the FKBP-type PPIase family. Tig subfamily.

Its subcellular location is the cytoplasm. The enzyme catalyses [protein]-peptidylproline (omega=180) = [protein]-peptidylproline (omega=0). Its function is as follows. Involved in protein export. Acts as a chaperone by maintaining the newly synthesized protein in an open conformation. Functions as a peptidyl-prolyl cis-trans isomerase. This is Trigger factor from Lactococcus lactis subsp. cremoris (strain SK11).